A 392-amino-acid chain; its full sequence is Probable inactive serine/threonine-protein kinase DDB_G0280855 (392 aa).

Positions 46-349 (ITKKTIYACD…IERIIQHPYF (304 aa)) constitute a Protein kinase domain. ATP is bound by residues 52-60 (YACDINGTM) and K75.

Belongs to the protein kinase superfamily. CMGC Ser/Thr protein kinase family. MAP kinase subfamily.

The polypeptide is Probable inactive serine/threonine-protein kinase DDB_G0280855 (Dictyostelium discoideum (Social amoeba)).